The sequence spans 634 residues: Hyphal wall protein 1 (634 aa).

The first 27 residues, 1 to 27 (MRLSTAQLIAIAYYMLSIGATVPQVDG), serve as a signal peptide directing secretion. Disordered stretches follow at residues 40–307 (SYDY…TTTT) and 412–570 (CPLT…SGAI). Residues 42 to 114 (DYYQEPCDDY…DYPQQPQEPC (73 aa)) show a composition bias toward low complexity. The stretch at 46 to 58 (EPCDDYPQQQQQQ) is one 1; approximate repeat. The segment at 46-187 (EPCDDYPQQQ…PNIPTDWIPD (142 aa)) is 14 X 10 AA tandem repeats of [EVIQ]-P-[CDT]-D-[YNW]-P-[PQ]-[QI]-[QP]-[QDN]. A 2; approximate repeat occupies 59–69 (EPCDYPQQQQQ). The 3; approximate repeat unit spans residues 70-81 (EEPCDYPQQQPQ). Repeat copies occupy residues 82–91 (EPCDYPQQPQ), 92–101 (EPCDYPQQPQ), 102–111 (EPCDYPQQPQ), 112–121 (EPCDNPPQPD), 122–131 (VPCDNPPQPD), 132–141 (VPCDNPPQPD), 142–151 (VPCDNPPQPD), 152–161 (VPCDNPPQPD), and 162–171 (QPDDNPPIPN). Positions 115 to 171 (DNPPQPDVPCDNPPQPDVPCDNPPQPDVPCDNPPQPDVPCDNPPQPDQPDDNPPIPN) are enriched in pro residues. One copy of the 13; truncated repeat lies at 172–179 (IPTDWIPN). Composition is skewed to low complexity over residues 172 to 183 (IPTDWIPNIPTD) and 193 to 307 (TTPA…TTTT). The stretch at 180 to 187 (IPTDWIPD) is one 14; truncated repeat. N-linked (GlcNAc...) asparagine glycans are attached at residues Asn-241 and Asn-286. Positions 415–426 (TENTPGTDSTPE) are enriched in polar residues. A compositionally biased stretch (low complexity) spans 508 to 550 (ETKPAAPKSSAPATEPSPVAPGTESAPAGPGASSSPKSSVLAS). Asn-601 carries N-linked (GlcNAc...) asparagine glycosylation. Residue Gly-613 is the site of GPI-anchor amidated glycine attachment. Residues 614–634 (AGNNMRLTFGAAIIGIAAFLI) constitute a propeptide, removed in mature form.

Belongs to the HWP1 family. Post-translationally, the GPI-anchor is attached to the protein in the endoplasmic reticulum and serves to target the protein to the cell surface. There, the glucosamine-inositol phospholipid moiety is cleaved off and the GPI-modified mannoprotein is covalently attached via its lipidless GPI glycan remnant to the 1,6-beta-glucan of the outer cell wall layer. Serves as a substrate for mammalian transglutaminases which are necessary for cross-linking between HWP1 and host epithelial cells. Also predicted to be a substrate for cleavage by KEX2. In terms of processing, N- and O-glycosylated.

It localises to the secreted. The protein resides in the cell wall. It is found in the membrane. In terms of biological role, major hyphal cell wall protein which plays a role of adhesin and is required for mating, normal hyphal development, cell-to-cell adhesive functions necessary for biofilm integrity, attachment to host, and virulence. Promotes interactions with host and bacterial molecules, thus leading to effective colonization within polymicrobial communities. Plays a crucial role in gastrointestinal colonization, in mucosal symptomatic and asymptomatic infections, in vaginitis, as well as in lethal oroesophageal candidiasis, caused by the combined action of fungal virulence factors and host inflammatory responses when protective immunity is absent. This chain is Hyphal wall protein 1 (HWP1), found in Candida albicans (strain SC5314 / ATCC MYA-2876) (Yeast).